We begin with the raw amino-acid sequence, 396 residues long: MLRWQTAGESHGEALVAMIEGMPSGVRVTSQDIRDALARRRLGYGRGARMKFEQDQVRLLTGVRFGSTLGSPIAIEIGNTEWPKWTEVMSADPLDHELAREGRNAPLSRPRPGHADLTGMRKYGFDDARPVLERSSARETASRVALGEVAALFLEQVAGIRTVSHVISIGGAGVESDNTPLPGPDDVAALDASPVRTLDKDAEERMVARIDEAKAKADTLGGVIEVIAYGVPAGIGTYVESDRRLDAALAAAVMGIQAIKGVEIGDGFLEAGRPGSMAHDEMVPGDDGCIARLSNRAGGIEGGMSNGQPIRVRAAMKPIPSIPRALRTVDITTGEAAQAINQRSDSTAVPAAAVVAEAMVRLTLAQHLLEKFGGDSIEETRRNIEGYLASWPEHMR.

2 residues coordinate NADP(+): Arg40 and Arg46. FMN-binding positions include Arg134 to Ser136, Gln257 to Ala258, Gly302, Lys317 to Ser321, and Arg343.

The protein belongs to the chorismate synthase family. As to quaternary structure, homotetramer. It depends on FMNH2 as a cofactor.

It carries out the reaction 5-O-(1-carboxyvinyl)-3-phosphoshikimate = chorismate + phosphate. The protein operates within metabolic intermediate biosynthesis; chorismate biosynthesis; chorismate from D-erythrose 4-phosphate and phosphoenolpyruvate: step 7/7. Its function is as follows. Catalyzes the anti-1,4-elimination of the C-3 phosphate and the C-6 proR hydrogen from 5-enolpyruvylshikimate-3-phosphate (EPSP) to yield chorismate, which is the branch point compound that serves as the starting substrate for the three terminal pathways of aromatic amino acid biosynthesis. This reaction introduces a second double bond into the aromatic ring system. This Bifidobacterium animalis subsp. lactis (strain AD011) protein is Chorismate synthase.